The sequence spans 355 residues: DNA-directed RNA polymerase subunit alpha (355 aa).

The interval 1 to 248 is alpha N-terminal domain (alpha-NTD); sequence MYYNNDVSLC…EQLQPFISSD (248 aa). The tract at residues 267-355 is alpha C-terminal domain (alpha-CTD); it reads YDPVLLRKVD…ELAKQHTDED (89 aa).

The protein belongs to the RNA polymerase alpha chain family. Homodimer. The RNAP catalytic core consists of 2 alpha, 1 beta, 1 beta' and 1 omega subunit. When a sigma factor is associated with the core the holoenzyme is formed, which can initiate transcription.

The enzyme catalyses RNA(n) + a ribonucleoside 5'-triphosphate = RNA(n+1) + diphosphate. Functionally, DNA-dependent RNA polymerase catalyzes the transcription of DNA into RNA using the four ribonucleoside triphosphates as substrates. This is DNA-directed RNA polymerase subunit alpha from Wolbachia pipientis wMel.